Consider the following 447-residue polypeptide: MNAWEVNFDGLVGLTHHYAGLSFGNEASTRHRFQVSNPRQAAKQGLLKMKALADAGFPQAVIPPHERPFIPVLRQLGFSGSDEQVLEKVARQAPHWLSSVSSASPMWVANAATIAPSADTLDGKVHLTVANLNNKFHRSLEAHVTESLLKAIFNDEEKFSVHSALPQVALLGDEGAANHNRLGGHYGEPGMQLFVYGREEGNDTRPSRYPARQTREASEAVARLNQVNPQQVIFAQQNPDVIDQGVFHNDVIAVSNRQVLFCHQQAFARQSQLLANLRARVNGFMAIEVPATQVSVSDAVSTYLFNSQLLSRDDGSMMLVLPQECREHAGVWGYLNELLAADNPISELKVFDLRESMANGGGPACLRLRVVLTEEERRAVNPAVMMNDTLFNALNDWVDRYYRDRLTAADLADPQLLREGREALDVLSQLLNLGSVYPFQREGGGNG.

Substrate is bound by residues 19-28 (AGLSFGNEAS), N110, and 137-138 (HR). Residue E174 is part of the active site. R212 lines the substrate pocket. Residue H248 is part of the active site. D250 and N359 together coordinate substrate. C365 serves as the catalytic Nucleophile.

This sequence belongs to the succinylarginine dihydrolase family. Homodimer.

It carries out the reaction N(2)-succinyl-L-arginine + 2 H2O + 2 H(+) = N(2)-succinyl-L-ornithine + 2 NH4(+) + CO2. The protein operates within amino-acid degradation; L-arginine degradation via AST pathway; L-glutamate and succinate from L-arginine: step 2/5. Catalyzes the hydrolysis of N(2)-succinylarginine into N(2)-succinylornithine, ammonia and CO(2). The polypeptide is N-succinylarginine dihydrolase (Escherichia coli O8 (strain IAI1)).